The sequence spans 142 residues: Large ribosomal subunit protein uL11 (142 aa).

Belongs to the universal ribosomal protein uL11 family. As to quaternary structure, part of the ribosomal stalk of the 50S ribosomal subunit. Interacts with L10 and the large rRNA to form the base of the stalk. L10 forms an elongated spine to which L12 dimers bind in a sequential fashion forming a multimeric L10(L12)X complex. In terms of processing, one or more lysine residues are methylated.

Functionally, forms part of the ribosomal stalk which helps the ribosome interact with GTP-bound translation factors. The polypeptide is Large ribosomal subunit protein uL11 (Rhodopseudomonas palustris (strain HaA2)).